Consider the following 309-residue polypeptide: MANSLYQKHIISIPELSRQELELIVETAGKIKKEPQPDLLKNKIVASCFFEASTRTRLSFETAIQRLGGSVIGFDTAGNTSLAQKGETLADSVQIITSYADAYVMRHPQEGAARLASEFSNGTPVINAGDGANQHPTQTLLDLYTIYETQGRLDNLNVAFVGDLKYGRTVHSLTQALAKFEGIKFFFIAPEVLAMPDYICEELDELGIEYQLVESMDDAIPELDILYMTRVQKERFDESEYAHIKSAYILSAENLQPARENLKVLHPLPRVDEIDTDVDATPHAYYFQQAENGVYARQALLALVLNETL.

Carbamoyl phosphate contacts are provided by arginine 55 and threonine 56. Lysine 85 serves as a coordination point for L-aspartate. Arginine 106, histidine 135, and glutamine 138 together coordinate carbamoyl phosphate. 2 residues coordinate L-aspartate: arginine 168 and arginine 230. Residues leucine 268 and proline 269 each contribute to the carbamoyl phosphate site.

This sequence belongs to the aspartate/ornithine carbamoyltransferase superfamily. ATCase family. In terms of assembly, heterododecamer (2C3:3R2) of six catalytic PyrB chains organized as two trimers (C3), and six regulatory PyrI chains organized as three dimers (R2).

The enzyme catalyses carbamoyl phosphate + L-aspartate = N-carbamoyl-L-aspartate + phosphate + H(+). It functions in the pathway pyrimidine metabolism; UMP biosynthesis via de novo pathway; (S)-dihydroorotate from bicarbonate: step 2/3. In terms of biological role, catalyzes the condensation of carbamoyl phosphate and aspartate to form carbamoyl aspartate and inorganic phosphate, the committed step in the de novo pyrimidine nucleotide biosynthesis pathway. This Aliivibrio fischeri (strain MJ11) (Vibrio fischeri) protein is Aspartate carbamoyltransferase catalytic subunit.